The sequence spans 181 residues: MIFMQILEPQEVPSFLMICQRRSPAMHRTCTDHAPLAIAQVWLWVSLAKAGSNRRGPGRAEGTFFSLLAALHAAQHFPNLPTAPGGASQSNIVSPELTPKPTTALKHAECLLDLNSHSLYRKPRPKAAVYLNLSLPLKSVHRLSLKKSFGFGKRDFENNSVFIVDSGGTCAGLLPGYIGWC.

This is an uncharacterized protein from Homo sapiens (Human).